A 1021-amino-acid chain; its full sequence is 2-oxoglutarate dehydrogenase complex component E1 (1021 aa).

The N-terminal 40 residues, 1–40 (MFNLRTCASKLRPLTASQTIRSLKHNRPAAPRTFQQFRCL), are a transit peptide targeting the mitochondrion. Ca(2+) contacts are provided by His142, Asp155, and Asp157. Positions 311, 410, 443, and 445 each coordinate thiamine diphosphate. Residues Asp410, Asn443, and Ile445 each contribute to the Mg(2+) site. Lys533 is covalently cross-linked (Glycyl lysine isopeptide (Lys-Gly) (interchain with G-Cter in ubiquitin)). Gln675 contributes to the thiamine diphosphate binding site.

Belongs to the alpha-ketoglutarate dehydrogenase family. As to quaternary structure, homodimer. The 2-oxoglutarate dehydrogenase complex is composed of OGDH (2-oxoglutarate dehydrogenase; E1), DLST (dihydrolipoamide succinyltransferase; E2) and DLD (dihydrolipoamide dehydrogenase; E3). It contains multiple copies of the three enzymatic components (E1, E2 and E3). In the nucleus, the 2-oxoglutarate dehydrogenase complex associates with kat2a. It depends on thiamine diphosphate as a cofactor. Mg(2+) is required as a cofactor. As to expression, expressed in the brain.

The protein resides in the mitochondrion. Its subcellular location is the nucleus. The enzyme catalyses N(6)-[(R)-lipoyl]-L-lysyl-[protein] + 2-oxoglutarate + H(+) = N(6)-[(R)-S(8)-succinyldihydrolipoyl]-L-lysyl-[protein] + CO2. Its activity is regulated as follows. Calcium ions and ADP stimulate, whereas ATP and NADH reduce catalytic activity. 2-oxoglutarate dehydrogenase (E1o) component of the 2-oxoglutarate dehydrogenase complex (OGDHC). Participates in the first step, rate limiting for the overall conversion of 2-oxoglutarate to succinyl-CoA and CO(2) catalyzed by the whole OGDHC. Catalyzes the irreversible decarboxylation of 2-oxoglutarate (alpha-ketoglutarate) via the thiamine diphosphate (ThDP) cofactor and subsequent transfer of the decarboxylated acyl intermediate on an oxidized dihydrolipoyl group that is covalently amidated to the E2 enzyme (dihydrolipoyllysine-residue succinyltransferase or DLST). Plays a key role in the Krebs (citric acid) cycle, which is a common pathway for oxidation of fuel molecules, including carbohydrates, fatty acids, and amino acids. Can catalyze the decarboxylation of 2-oxoadipate in vitro, but at a much lower rate than 2-oxoglutarate. Mainly active in the mitochondrion. A fraction of the 2-oxoglutarate dehydrogenase complex also localizes in the nucleus and is required for lysine succinylation of histones: associates with KAT2A on chromatin and provides succinyl-CoA to histone succinyltransferase KAT2A. This Xenopus laevis (African clawed frog) protein is 2-oxoglutarate dehydrogenase complex component E1 (ogdh).